Reading from the N-terminus, the 393-residue chain is Branched-chain-amino-acid aminotransferase, mitochondrial (393 aa).

The transit peptide at 1-27 (MSAAILGQVWTRKLLPIPWRLCVPGRC) directs the protein to the mitochondrion. Tyr-169 contacts substrate. Residue Lys-230 is modified to N6-(pyridoxal phosphate)lysine. N6-acetyllysine is present on Lys-322.

Belongs to the class-IV pyridoxal-phosphate-dependent aminotransferase family. In terms of assembly, homodimer. Requires pyridoxal 5'-phosphate as cofactor. In terms of tissue distribution, expressed in all tissues.

It is found in the mitochondrion. The catalysed reaction is L-leucine + 2-oxoglutarate = 4-methyl-2-oxopentanoate + L-glutamate. It carries out the reaction L-isoleucine + 2-oxoglutarate = (S)-3-methyl-2-oxopentanoate + L-glutamate. It catalyses the reaction L-valine + 2-oxoglutarate = 3-methyl-2-oxobutanoate + L-glutamate. In terms of biological role, catalyzes the first reaction in the catabolism of the essential branched chain amino acids leucine, isoleucine, and valine. May also function as a transporter of branched chain alpha-keto acids. The chain is Branched-chain-amino-acid aminotransferase, mitochondrial (Bcat2) from Rattus norvegicus (Rat).